Consider the following 430-residue polypeptide: MHATVSPSRVRGRARAPPSKSYTHRALLAAGYADGETVVRDPLVSADTRATARAVELLGGAAARENGDWVVTGFGSRPAIPDAVIDCANSGTTMRLVTAAAALADGTTVLTGDESLRARPHGPLLDALSGLGGTARSTRGNGQAPLVVDGPVSGGSVALPGDVSSQFVTALLMAGAVTETGIETDLTTELKSAPYVDITLDVLDAFGVGASETAAGYRVRGGQAYAPSGAEYAVPGDFSSASYLLAAGALAAADGAAVVVEGMHPSAQGDAAIVDVLERMGADIDWDTESGVITVQRSELSGVEVGVADTPDLLPTIAVLGAAADGTTRITDAEHVRYKETDRVAAMAESLSKLGASVEERPDELVVRGGDTELSGASVDGRGDHRLVMALAVAGLVADGETTIAGSEHVDVSFPDFFEVLAGLGADTDG.

A disordered region spans residues Met-1 to Lys-20. Residues Lys-20, Ser-21, and Arg-25 each contribute to the 3-phosphoshikimate site. A phosphoenolpyruvate-binding site is contributed by Lys-20. Phosphoenolpyruvate contacts are provided by Gly-91 and Arg-119. 3-phosphoshikimate contacts are provided by Ser-164, Ser-165, Gln-166, Ser-192, Asp-312, and Lys-339. Gln-166 is a binding site for phosphoenolpyruvate. The active-site Proton acceptor is Asp-312. Arg-343 and Arg-386 together coordinate phosphoenolpyruvate.

It belongs to the EPSP synthase family. In terms of assembly, monomer.

The protein localises to the cytoplasm. It catalyses the reaction 3-phosphoshikimate + phosphoenolpyruvate = 5-O-(1-carboxyvinyl)-3-phosphoshikimate + phosphate. The protein operates within metabolic intermediate biosynthesis; chorismate biosynthesis. In terms of biological role, catalyzes the transfer of the enolpyruvyl moiety of phosphoenolpyruvate (PEP) to the 5-hydroxyl of shikimate-3-phosphate (S3P) to produce enolpyruvyl shikimate-3-phosphate and inorganic phosphate. This Halobacterium salinarum (strain ATCC 29341 / DSM 671 / R1) protein is 3-phosphoshikimate 1-carboxyvinyltransferase.